The chain runs to 329 residues: tRNA dimethylallyltransferase (329 aa).

Residue 12–19 (GPTSVGKT) coordinates ATP. Residue 14–19 (TSVGKT) participates in substrate binding. The interaction with substrate tRNA stretch occupies residues 37 to 40 (DSRY). The tract at residues 306–329 (LREESDEGDVAVHQSGGGKEAPRA) is disordered. Over residues 320–329 (SGGGKEAPRA) the composition is skewed to gly residues.

Belongs to the IPP transferase family. In terms of assembly, monomer. Requires Mg(2+) as cofactor.

The catalysed reaction is adenosine(37) in tRNA + dimethylallyl diphosphate = N(6)-dimethylallyladenosine(37) in tRNA + diphosphate. In terms of biological role, catalyzes the transfer of a dimethylallyl group onto the adenine at position 37 in tRNAs that read codons beginning with uridine, leading to the formation of N6-(dimethylallyl)adenosine (i(6)A). This Thermomicrobium roseum (strain ATCC 27502 / DSM 5159 / P-2) protein is tRNA dimethylallyltransferase.